The chain runs to 261 residues: Small ribosomal subunit protein eS4z (261 aa).

One can recognise an S4 RNA-binding domain in the interval Leu-42–Asp-104.

The protein belongs to the eukaryotic ribosomal protein eS4 family.

The protein resides in the cytoplasm. This Arabidopsis thaliana (Mouse-ear cress) protein is Small ribosomal subunit protein eS4z (RPS4A).